The chain runs to 115 residues: Evasin P1183 (115 aa).

Residues 1–25 (MTRNWSFRVIFVSAMWCALLKFATL) form the signal peptide. 4 disulfides stabilise this stretch: C38–C58, C54–C94, C70–C99, and C89–C108. N-linked (GlcNAc...) asparagine glycans are attached at residues N45, N72, and N103.

Its subcellular location is the secreted. Its function is as follows. Salivary chemokine-binding protein which binds to host chemokine CCL2. The protein is Evasin P1183 of Amblyomma triste (Neotropical tick).